A 287-amino-acid chain; its full sequence is 4-hydroxybenzoate octaprenyltransferase (287 aa).

Helical transmembrane passes span 41-61, 89-109, 133-153, 158-178, 202-224, and 266-286; these read WPLL…GCAM, WEAV…ILPL, FFAI…PMAF, DTVP…SVAY, FGRF…YVWI, and HNNW…LLAG.

Belongs to the UbiA prenyltransferase family. Requires Mg(2+) as cofactor.

The protein localises to the cell inner membrane. The enzyme catalyses all-trans-octaprenyl diphosphate + 4-hydroxybenzoate = 4-hydroxy-3-(all-trans-octaprenyl)benzoate + diphosphate. It participates in cofactor biosynthesis; ubiquinone biosynthesis. Its function is as follows. Catalyzes the prenylation of para-hydroxybenzoate (PHB) with an all-trans polyprenyl group. Mediates the second step in the final reaction sequence of ubiquinone-8 (UQ-8) biosynthesis, which is the condensation of the polyisoprenoid side chain with PHB, generating the first membrane-bound Q intermediate 3-octaprenyl-4-hydroxybenzoate. The chain is 4-hydroxybenzoate octaprenyltransferase from Burkholderia cenocepacia (strain HI2424).